Here is a 137-residue protein sequence, read N- to C-terminus: Large ribosomal subunit protein uL16 (137 aa).

Positions 1–14 (MLQPNRRKFRKEHK) are enriched in basic residues. Residues 1–22 (MLQPNRRKFRKEHKGRNEGLAT) are disordered.

The protein belongs to the universal ribosomal protein uL16 family. In terms of assembly, part of the 50S ribosomal subunit.

In terms of biological role, binds 23S rRNA and is also seen to make contacts with the A and possibly P site tRNAs. This is Large ribosomal subunit protein uL16 from Dechloromonas aromatica (strain RCB).